Consider the following 97-residue polypeptide: Small cell adhesion glycoprotein (97 aa).

Residues 1–36 (MNNLPATPSPEELMTTPVFQAPETMSPQAEEASTAL) lie on the Extracellular side of the membrane. O-linked (GalNAc...) threonine glycosylation is present at Thr7. The O-linked (GalNAc...) serine glycan is linked to Ser9. 3 O-linked (GalNAc...) threonine glycosylation sites follow: Thr15, Thr16, and Thr24. An O-linked (GalNAc...) serine glycan is attached at Ser26. A helical; Signal-anchor for type III membrane protein membrane pass occupies residues 37–57 (IAVVITVVFLTLLSVVTLIFF). Topologically, residues 58–97 (YLYKNKGSYVTYEPAEGEPSAILQMETDSAKGKEKEEYFI) are cytoplasmic.

The protein belongs to the SMAGP family. O-glycosylated. The O-glycan is modified with sialic acid residues. In terms of tissue distribution, detected in brain (at protein level). Highly expressed in kidney and placenta. Detected in skin, breast, heart, lung, liver, prostate, spleen, small intestine, colon and stomach.

It is found in the cell membrane. It localises to the cytoplasmic vesicle membrane. Functionally, may play a role in epithelial cell-cell contacts. May play a role in tumor invasiveness and metastasis formation. This Rattus norvegicus (Rat) protein is Small cell adhesion glycoprotein (Smagp).